The primary structure comprises 441 residues: Dolichyl-diphosphooligosaccharide--protein glycosyltransferase 48 kDa subunit (441 aa).

Residues 1 to 28 (MKMVPRLAVRAWPLCGLLLAALGCVCAS) form the signal peptide. Over 29 to 412 (GPRTLVLLDN…YERFIPSAYP (384 aa)) the chain is Lumenal. The chain crosses the membrane as a helical span at residues 413–432 (YYASAFSMMAGLFLFSVVFL). Residues 433–441 (HMKEKEKSD) are Cytoplasmic-facing.

This sequence belongs to the DDOST 48 kDa subunit family. Component of the oligosaccharyltransferase (OST) complex. OST exists in two different complex forms which contain common core subunits RPN1, RPN2, OST48, OST4, DAD1 and TMEM258, either STT3A or STT3B as catalytic subunits, and form-specific accessory subunits. STT3A complex assembly occurs through the formation of 3 subcomplexes. Subcomplex 1 contains RPN1 and TMEM258, subcomplex 2 contains the STT3A-specific subunits STT3A, DC2/OSTC, and KCP2 as well as the core subunit OST4, and subcomplex 3 contains RPN2, DAD1, and OST48. The STT3A complex can form stable complexes with the Sec61 complex or with both the Sec61 and TRAP complexes. Interacts with SMIM22.

It localises to the endoplasmic reticulum membrane. It participates in protein modification; protein glycosylation. Functionally, subunit of the oligosaccharyl transferase (OST) complex that catalyzes the initial transfer of a defined glycan (Glc(3)Man(9)GlcNAc(2) in eukaryotes) from the lipid carrier dolichol-pyrophosphate to an asparagine residue within an Asn-X-Ser/Thr consensus motif in nascent polypeptide chains, the first step in protein N-glycosylation. N-glycosylation occurs cotranslationally and the complex associates with the Sec61 complex at the channel-forming translocon complex that mediates protein translocation across the endoplasmic reticulum (ER). All subunits are required for a maximal enzyme activity. Required for the assembly of both SST3A- and SS3B-containing OST complexes. The sequence is that of Dolichyl-diphosphooligosaccharide--protein glycosyltransferase 48 kDa subunit from Rattus norvegicus (Rat).